A 122-amino-acid chain; its full sequence is MASVYENSYMIVLIFLLLGILLPVVALTLGRMLRPNKPSAAKATTYESGIEPFHDANIRFHARYYIFALLFVIFDVETLFLYPWAVAYDNLGLFALIEMLIFVVMLLVGLAYAWKKKVLQWL.

A run of 3 helical transmembrane segments spans residues 10-30 (MIVLIFLLLGILLPVVALTLG), 66-86 (IFALLFVIFDVETLFLYPWAV), and 91-111 (LGLFALIEMLIFVVMLLVGLA).

It belongs to the complex I subunit 3 family. As to quaternary structure, NDH-1 is composed of 14 different subunits. Subunits NuoA, H, J, K, L, M, N constitute the membrane sector of the complex.

Its subcellular location is the cell membrane. It carries out the reaction a quinone + NADH + 5 H(+)(in) = a quinol + NAD(+) + 4 H(+)(out). In terms of biological role, NDH-1 shuttles electrons from NADH, via FMN and iron-sulfur (Fe-S) centers, to quinones in the respiratory chain. The immediate electron acceptor for the enzyme in this species is believed to be a menaquinone. Couples the redox reaction to proton translocation (for every two electrons transferred, four hydrogen ions are translocated across the cytoplasmic membrane), and thus conserves the redox energy in a proton gradient. In Bacillus anthracis, this protein is NADH-quinone oxidoreductase subunit A.